The primary structure comprises 63 residues: Large ribosomal subunit protein bL35 (63 aa).

This sequence belongs to the bacterial ribosomal protein bL35 family.

This chain is Large ribosomal subunit protein bL35, found in Campylobacter curvus (strain 525.92).